The chain runs to 590 residues: Probable metalloendopeptidase G1-type (590 aa).

Residue His41 participates in Zn(2+) binding. Residue Glu44 is part of the active site. Residue His45 coordinates Zn(2+).

The protein belongs to the peptidase M44 family. Requires Zn(2+) as cofactor.

Seems to be involved in viral proteins maturation by cleavage at Ala-Gly-|-Xaa motifs. This chain is Probable metalloendopeptidase G1-type (GP045L), found in Oryctolagus cuniculus (Rabbit).